The primary structure comprises 489 residues: Beta-1,3-glucosyltransferase (489 aa).

A topological domain (cytoplasmic) is located at residue M1. Residues 2–22 (RPPALLALFSCSAAFALMSEE) form a helical; Signal-anchor for type II membrane protein membrane-spanning segment. Over 23–489 (IKEKVTPSQD…ETQKDPREEL (467 aa)) the chain is Lumenal. N78 carries N-linked (GlcNAc...) asparagine glycosylation. Residues 486 to 489 (REEL) carry the Prevents secretion from ER motif.

The protein belongs to the glycosyltransferase 31 family.

Its subcellular location is the endoplasmic reticulum membrane. It participates in protein modification; protein glycosylation. Functionally, O-glucosyltransferase that transfers glucose toward fucose with a beta-1,3 linkage. Specifically glucosylates O-linked fucosylglycan on TSP type-1 domains of proteins, thereby contributing to elongation of O-fucosylglycan. This chain is Beta-1,3-glucosyltransferase, found in Mus musculus (Mouse).